We begin with the raw amino-acid sequence, 203 residues long: Hypoxanthine-guanine phosphoribosyltransferase (203 aa).

2 residues coordinate diphosphate: lysine 66 and glycine 67. Residues glutamate 122 and aspartate 123 each coordinate Mg(2+). The active-site Proton acceptor is aspartate 126. GMP-binding positions include lysine 154, 175–176 (FV), and aspartate 182. Position 188 (arginine 188) interacts with diphosphate.

This sequence belongs to the purine/pyrimidine phosphoribosyltransferase family. Mg(2+) serves as cofactor.

It localises to the cytoplasm. It catalyses the reaction IMP + diphosphate = hypoxanthine + 5-phospho-alpha-D-ribose 1-diphosphate. The enzyme catalyses GMP + diphosphate = guanine + 5-phospho-alpha-D-ribose 1-diphosphate. It participates in purine metabolism; IMP biosynthesis via salvage pathway; IMP from hypoxanthine: step 1/1. The protein operates within purine metabolism; GMP biosynthesis via salvage pathway; GMP from guanine: step 1/1. Purine salvage pathway enzyme that catalyzes the transfer of the ribosyl-5-phosphate group from 5-phospho-alpha-D-ribose 1-diphosphate (PRPP) to the N9 position of the 6-oxopurines hypoxanthine and guanine to form the corresponding ribonucleotides IMP (inosine 5'-monophosphate) and GMP (guanosine 5'-monophosphate), with the release of PPi. The protein is Hypoxanthine-guanine phosphoribosyltransferase (hpt) of Mycobacterium avium.